A 196-amino-acid polypeptide reads, in one-letter code: DnaA initiator-associating protein DiaA (196 aa).

Residues 34–196 (MVQSLLNGNK…DNTLFPHQDD (163 aa)) form the SIS domain.

This sequence belongs to the SIS family. DiaA subfamily. Homotetramer; dimer of dimers.

Required for the timely initiation of chromosomal replication via direct interactions with the DnaA initiator protein. The polypeptide is DnaA initiator-associating protein DiaA (Photorhabdus laumondii subsp. laumondii (strain DSM 15139 / CIP 105565 / TT01) (Photorhabdus luminescens subsp. laumondii)).